We begin with the raw amino-acid sequence, 199 residues long: Glycerol-3-phosphate acyltransferase (199 aa).

The next 5 membrane-spanning stretches (helical) occupy residues 5 to 25 (AFLV…VALV), 51 to 71 (KLGV…VLCA), 79 to 99 (VFLS…VFLY), 112 to 132 (VFLG…VAVI), and 153 to 173 (CAWL…GLVI).

It belongs to the PlsY family. In terms of assembly, probably interacts with PlsX.

It localises to the cell inner membrane. The catalysed reaction is an acyl phosphate + sn-glycerol 3-phosphate = a 1-acyl-sn-glycero-3-phosphate + phosphate. It functions in the pathway lipid metabolism; phospholipid metabolism. Functionally, catalyzes the transfer of an acyl group from acyl-phosphate (acyl-PO(4)) to glycerol-3-phosphate (G3P) to form lysophosphatidic acid (LPA). This enzyme utilizes acyl-phosphate as fatty acyl donor, but not acyl-CoA or acyl-ACP. The protein is Glycerol-3-phosphate acyltransferase of Solidesulfovibrio magneticus (strain ATCC 700980 / DSM 13731 / RS-1) (Desulfovibrio magneticus).